A 275-amino-acid polypeptide reads, in one-letter code: Tryptophan synthase alpha chain (275 aa).

Residues glutamate 51 and aspartate 62 each act as proton acceptor in the active site.

It belongs to the TrpA family. In terms of assembly, tetramer of two alpha and two beta chains.

The enzyme catalyses (1S,2R)-1-C-(indol-3-yl)glycerol 3-phosphate + L-serine = D-glyceraldehyde 3-phosphate + L-tryptophan + H2O. It participates in amino-acid biosynthesis; L-tryptophan biosynthesis; L-tryptophan from chorismate: step 5/5. Functionally, the alpha subunit is responsible for the aldol cleavage of indoleglycerol phosphate to indole and glyceraldehyde 3-phosphate. The sequence is that of Tryptophan synthase alpha chain from Methanopyrus kandleri (strain AV19 / DSM 6324 / JCM 9639 / NBRC 100938).